Consider the following 406-residue polypeptide: Cysteine desulfurase (406 aa).

At Lys226 the chain carries N6-(pyridoxal phosphate)lysine. Cys364 serves as the catalytic Cysteine persulfide intermediate.

The protein belongs to the class-V pyridoxal-phosphate-dependent aminotransferase family. Csd subfamily. As to quaternary structure, homodimer. Interacts with SufE and the SufBCD complex composed of SufB, SufC and SufD. The interaction with SufE is required to mediate the direct transfer of the sulfur atom from the S-sulfanylcysteine. Pyridoxal 5'-phosphate serves as cofactor.

It is found in the cytoplasm. It carries out the reaction (sulfur carrier)-H + L-cysteine = (sulfur carrier)-SH + L-alanine. The enzyme catalyses L-selenocysteine + AH2 = hydrogenselenide + L-alanine + A + H(+). The protein operates within cofactor biosynthesis; iron-sulfur cluster biosynthesis. Functionally, cysteine desulfurases mobilize the sulfur from L-cysteine to yield L-alanine, an essential step in sulfur metabolism for biosynthesis of a variety of sulfur-containing biomolecules. Component of the suf operon, which is activated and required under specific conditions such as oxidative stress and iron limitation. Acts as a potent selenocysteine lyase in vitro, that mobilizes selenium from L-selenocysteine. Selenocysteine lyase activity is however unsure in vivo. This chain is Cysteine desulfurase, found in Yersinia pseudotuberculosis serotype O:1b (strain IP 31758).